Here is a 209-residue protein sequence, read N- to C-terminus: Pyridoxal 5'-phosphate synthase subunit PdxT (209 aa).

58-60 (GES) contributes to the L-glutamine binding site. The active-site Nucleophile is C90. L-glutamine is bound by residues R119 and 148–149 (IR). Catalysis depends on charge relay system residues H185 and E187.

It belongs to the glutaminase PdxT/SNO family. In terms of assembly, in the presence of PdxS, forms a dodecamer of heterodimers. Only shows activity in the heterodimer.

The catalysed reaction is aldehydo-D-ribose 5-phosphate + D-glyceraldehyde 3-phosphate + L-glutamine = pyridoxal 5'-phosphate + L-glutamate + phosphate + 3 H2O + H(+). It catalyses the reaction L-glutamine + H2O = L-glutamate + NH4(+). It functions in the pathway cofactor biosynthesis; pyridoxal 5'-phosphate biosynthesis. Its function is as follows. Catalyzes the hydrolysis of glutamine to glutamate and ammonia as part of the biosynthesis of pyridoxal 5'-phosphate. The resulting ammonia molecule is channeled to the active site of PdxS. This chain is Pyridoxal 5'-phosphate synthase subunit PdxT, found in Clavibacter michiganensis subsp. michiganensis (strain NCPPB 382).